The primary structure comprises 1723 residues: Probable outer membrane protein pmp20 (1723 aa).

The N-terminal stretch at 1–21 (MKWLPATAVFAAVLPALTAFG) is a signal peptide. 2 disordered regions span residues 78-100 (VTPD…SGAT) and 139-161 (LSSS…SASA). 2 stretches are compositionally biased toward low complexity: residues 85–100 (SSSN…SGAT) and 140–161 (SSSS…SASA). Residues 1434 to 1723 (EDPAFNNFWA…MANGGIRFVF (290 aa)) enclose the Autotransporter domain.

The protein belongs to the PMP outer membrane protein family.

It localises to the secreted. Its subcellular location is the cell wall. The protein localises to the cell outer membrane. The polypeptide is Probable outer membrane protein pmp20 (pmp20) (Chlamydia pneumoniae (Chlamydophila pneumoniae)).